Here is a 203-residue protein sequence, read N- to C-terminus: GTP-binding protein yptV1 (203 aa).

GTP is bound by residues 15–23 (GDSGVGKSC), 33–40 (YTESYIST), 63–67 (DTAGQ), 121–124 (NKSD), and 151–153 (SAK). The short motif at 37-45 (YISTIGVDF) is the Effector region element. A disordered region spans residues 173 to 203 (MASQPVPPKPGGPVVRPTEGKPINNKSSSCC). 2 S-geranylgeranyl cysteine lipidation sites follow: C202 and C203.

It belongs to the small GTPase superfamily. Rab family.

The protein localises to the cell membrane. Functionally, protein transport. Probably involved in vesicular traffic. The protein is GTP-binding protein yptV1 (YPTV1) of Volvox carteri (Green alga).